Reading from the N-terminus, the 59-residue chain is Single-pass membrane and coiled-coil domain-containing protein 4 (59 aa).

A disordered region spans residues 1–25; the sequence is MRQLRGKPKKETSKDKKERKQAMQE. A compositionally biased stretch (basic and acidic residues) spans 9 to 22; it reads KKETSKDKKERKQA. The stretch at 9 to 31 forms a coiled coil; that stretch reads KKETSKDKKERKQAMQEARQQIT. A helical transmembrane segment spans residues 32 to 52; sequence TVVLPTLAVVVLLIVVFVYVA.

Belongs to the SMCO4 family.

It is found in the membrane. This chain is Single-pass membrane and coiled-coil domain-containing protein 4 (smco4), found in Taeniopygia guttata (Zebra finch).